The chain runs to 182 residues: ATP-dependent protease subunit HslV (182 aa).

T10 is an active-site residue. A166, C169, and S172 together coordinate Na(+).

It belongs to the peptidase T1B family. HslV subfamily. In terms of assembly, a double ring-shaped homohexamer of HslV is capped on each side by a ring-shaped HslU homohexamer. The assembly of the HslU/HslV complex is dependent on binding of ATP.

The protein localises to the cytoplasm. It catalyses the reaction ATP-dependent cleavage of peptide bonds with broad specificity.. Allosterically activated by HslU binding. Protease subunit of a proteasome-like degradation complex believed to be a general protein degrading machinery. This chain is ATP-dependent protease subunit HslV, found in Rickettsia felis (strain ATCC VR-1525 / URRWXCal2) (Rickettsia azadi).